A 204-amino-acid polypeptide reads, in one-letter code: Movement protein TGB2 (204 aa).

At 1–11 (MKTTVGSRPNK) the chain is on the cytoplasmic side. A helical membrane pass occupies residues 12 to 32 (YWPIVAGIGVVGLFAYLIFSN). The Lumenal portion of the chain corresponds to 33–72 (QKHSTESGDNIHKFANGGSYRDGSKSISYNRNHPFAYGNA). The chain crosses the membrane as a helical span at residues 73–93 (SSPGMLLPAMLTIIGIISYLW). The Cytoplasmic portion of the chain corresponds to 94–204 (RTRDSVLGDS…RFNQCFEYSS (111 aa)).

Belongs to the virgaviridae/benyvirus TGB2 movement protein family. Interacts with movement protein TGB3. TGB1-TGB3-TGB2 complex formation is enhanced by ATP hydrolysis.

The protein resides in the host cell junction. Its subcellular location is the host plasmodesma. It is found in the host endoplasmic reticulum membrane. It localises to the host cytoplasm. The protein localises to the host cytoskeleton. In terms of biological role, participates in the transport of viral genome to neighboring plant cells directly through plasmodesmata, without any budding. TGBp2 and TGBp3 are necessary for intracellular delivery of TGBp1-containing vRNPs to plasmodesmata. Can gate plasmodesmata and increase their size exclusion limit. To a lesser extent than TGB3, induces host actin cytoskeleton network thickening, which probably plays a major role in virus cell-to-cell movement. The sequence is that of Movement protein TGB2 from Barley stripe mosaic virus (BSMV).